The chain runs to 199 residues: Lipid A acyltransferase PagP (199 aa).

The first 25 residues, 1–25 (MNYKDIINACILSGVFLLHSPSALA), serve as a signal peptide directing secretion. Catalysis depends on residues His-74, Asp-117, and Ser-118.

It belongs to the lipid A palmitoyltransferase family. In terms of assembly, homodimer.

Its subcellular location is the cell outer membrane. The enzyme catalyses a lipid A + a 1,2-diacyl-sn-glycero-3-phosphocholine = a hepta-acyl lipid A + a 2-acyl-sn-glycero-3-phosphocholine. It catalyses the reaction a lipid IVA + a 1,2-diacyl-sn-glycero-3-phosphocholine = a lipid IVB + a 2-acyl-sn-glycero-3-phosphocholine. It carries out the reaction a lipid IIA + a 1,2-diacyl-sn-glycero-3-phosphocholine = a lipid IIB + a 2-acyl-sn-glycero-3-phosphocholine. Transfers a fatty acid residue from the sn-1 position of a phospholipid to the N-linked hydroxyfatty acid chain on the proximal unit of lipid A or its precursors. The sequence is that of Lipid A acyltransferase PagP from Yersinia pestis bv. Antiqua (strain Antiqua).